Consider the following 212-residue polypeptide: Peptide methionine sulfoxide reductase MsrA (212 aa).

Residue C52 is part of the active site.

The protein belongs to the MsrA Met sulfoxide reductase family.

It carries out the reaction L-methionyl-[protein] + [thioredoxin]-disulfide + H2O = L-methionyl-(S)-S-oxide-[protein] + [thioredoxin]-dithiol. It catalyses the reaction [thioredoxin]-disulfide + L-methionine + H2O = L-methionine (S)-S-oxide + [thioredoxin]-dithiol. Functionally, has an important function as a repair enzyme for proteins that have been inactivated by oxidation. Catalyzes the reversible oxidation-reduction of methionine sulfoxide in proteins to methionine. The protein is Peptide methionine sulfoxide reductase MsrA of Yersinia pseudotuberculosis serotype O:1b (strain IP 31758).